The primary structure comprises 102 residues: ATP-dependent Clp protease adapter protein ClpS (102 aa).

This sequence belongs to the ClpS family. Binds to the N-terminal domain of the chaperone ClpA.

Involved in the modulation of the specificity of the ClpAP-mediated ATP-dependent protein degradation. This is ATP-dependent Clp protease adapter protein ClpS from Shewanella baltica (strain OS155 / ATCC BAA-1091).